Here is a 988-residue protein sequence, read N- to C-terminus: Vacuolar sorting protein 18 (988 aa).

Residues 589 to 749 form a CHCR repeat; that stretch reads NKNLNPRRLI…VVKQEKGAKR (161 aa). Residues 785–819 adopt a coiled-coil conformation; sequence KEAICSSLEDYNKQIEQLKEEMNDATRGADNIRND. An RING-type; degenerate zinc finger spans residues 836–886; it reads CGVCKRKILMMSGDFRMAQGYSSAGPLAPFYVFPCGHSFHAQCLITHVTSC.

The protein belongs to the VPS18 family. As to quaternary structure, core component of at least two putative endosomal tethering complexes, the homotypic fusion and vacuole protein sorting (HOPS) complex and the class C core vacuole/endosome tethering (CORVET) complex. Their common core is composed of the class C Vps proteins VPS11, VCL1, VPS18 and VPS33, which in HOPS further associates with VPS39 and VPS41 and in CORVET with VPS3.

Its subcellular location is the endosome membrane. The protein localises to the vacuole membrane. It localises to the cytoplasm. Its function is as follows. Essential protein required during embryogenesis. Believed to act as a core component of the putative HOPS endosomal tethering complex and of the class C core vacuole/endosome tethering (CORVET) complex. CORVET is required for vacuolar transport of SYP22. HOPS is required for the central vacuole formation. Involved in root development. Plays a role in vesicle-mediated protein trafficking to lysosomal compartments including the endocytic membrane transport pathways. This Arabidopsis thaliana (Mouse-ear cress) protein is Vacuolar sorting protein 18.